The chain runs to 851 residues: Nucleolar RNA helicase 2 (851 aa).

Residues 1-260 (MPGKLRSGAK…IPVEQKEGAF (260 aa)) are disordered. Ser7 and Ser13 each carry phosphoserine. Composition is skewed to basic and acidic residues over residues 26-42 (PSEKKTRKEKTKSKTEE) and 99-113 (EPLEKQADSETKEII). Lys39 carries the post-translational modification N6-acetyllysine. Tandem repeats lie at residues 117–153 (PSEEEADMPKPKKMKKGKEANGDAGEKSPKLKNGLSQ), 154–190 (PSEEEADIPKPKKMKKGKEANGDAGEKSPKLKNGLSQ), and 191–227 (PSEEEVDIPKPKKMKKGKEASGDAGEKSPRLKDGLSQ). Residues 117–227 (PSEEEADMPK…SPRLKDGLSQ (111 aa)) form a 3 X 37 AA tandem repeats region. Ser118 carries the phosphoserine modification. The span at 133–145 (GKEANGDAGEKSP) shows a compositional bias: basic and acidic residues. Lys134 carries the post-translational modification N6-acetyllysine. 9 positions are modified to phosphoserine: Ser144, Ser155, Ser181, Ser192, Ser218, Ser236, Ser243, Ser244, and Ser245. Over residues 170–182 (GKEANGDAGEKSP) the composition is skewed to basic and acidic residues. Over residues 207 to 223 (GKEASGDAGEKSPRLKD) the composition is skewed to basic and acidic residues. Residues 226–237 (SQPSEPKSNSSD) are compositionally biased toward polar residues. Residues 246–257 (ETEKEIPVEQKE) are compositionally biased toward basic and acidic residues. The Q motif signature appears at 258-286 (GAFSNFPISEETVKLLKARGVNFLFPIQA). Positions 289–468 (FHHVYSGKDL…KKYMKSTYEQ (180 aa)) constitute a Helicase ATP-binding domain. 302 to 309 (ARTGTGKT) contacts ATP. A Phosphothreonine modification is found at Thr368. Positions 411-414 (DEVD) match the DEAD box motif. In terms of domain architecture, Helicase C-terminal spans 501–645 (DVIRVYSGHQ…GVPSATEIIK (145 aa)). Ser639 is modified (phosphoserine). The residue at position 672 (Lys672) is an N6-acetyllysine. Residues 783–851 (QPELEGPPDG…KRSFSKAFGQ (69 aa)) form a disordered region. 3 repeat units span residues 807 to 811 (FRGQR), 817 to 823 (FRGQGQR), and 829 to 833 (FRGQR). Residues 807-833 (FRGQRGGSRNFRGQGQRGGSRNFRGQR) are 3 X 5 AA repeats. Lys847 carries the N6-acetyllysine modification.

Belongs to the DEAD box helicase family. DDX21/DDX50 subfamily. As to quaternary structure, homodimer; homodimerizes via its N-terminus. Found in a multi-helicase-TICAM1 complex at least composed of DHX36, DDX1, DDX21 and TICAM1; this complex exists in resting cells with or without poly(I:C) RNA ligand stimulation. Interacts (via C-terminus) with TICAM1 (via TIR domain). Interacts with DHX36 (via C-terminus); this interaction serves as bridges to TICAM1. Interacts (via C-terminus) with DDX1 (via B30.2/SPRY domain); this interaction serves as bridges to TICAM1. Component of the B-WICH complex, at least composed of SMARCA5/SNF2H, BAZ1B/WSTF, SF3B1, DEK, MYO1C, ERCC6, MYBBP1A and DDX21. Interacts with C1QBP. Interacts with JUN. Interacts with WDR46. Interacts with MCM3AP. Interacts with WDR43. Interacts with KPNA3. Interacts with GID4. In terms of processing, acetylation by CREBBP/CBP inhibits the helicase activity. Deacetylation by SIRT7 promotes the helicase activity and overcomes R-loop-mediated stalling of RNA polymerases. As to expression, highly expressed in liver and testis. Expressed at lower level in brain, lungs, and skeletal muscle.

The protein resides in the nucleus. It localises to the nucleolus. Its subcellular location is the nucleoplasm. The protein localises to the cytoplasm. It is found in the cytosol. The protein resides in the mitochondrion. The enzyme catalyses ATP + H2O = ADP + phosphate + H(+). Its activity is regulated as follows. Acetylation inhibits the helicase activity. Its function is as follows. RNA helicase that acts as a sensor of the transcriptional status of both RNA polymerase (Pol) I and II: promotes ribosomal RNA (rRNA) processing and transcription from polymerase II (Pol II). Binds various RNAs, such as rRNAs, snoRNAs, 7SK and, at lower extent, mRNAs. In the nucleolus, localizes to rDNA locus, where it directly binds rRNAs and snoRNAs, and promotes rRNA transcription, processing and modification. Required for rRNA 2'-O-methylation, possibly by promoting the recruitment of late-acting snoRNAs SNORD56 and SNORD58 with pre-ribosomal complexes. In the nucleoplasm, binds 7SK RNA and is recruited to the promoters of Pol II-transcribed genes: acts by facilitating the release of P-TEFb from inhibitory 7SK snRNP in a manner that is dependent on its helicase activity, thereby promoting transcription of its target genes. Functions as cofactor for JUN-activated transcription: required for phosphorylation of JUN at 'Ser-77'. Can unwind double-stranded RNA (helicase) and can fold or introduce a secondary structure to a single-stranded RNA (foldase). Together with SIRT7, required to prevent R-loop-associated DNA damage and transcription-associated genomic instability: deacetylation by SIRT7 activates the helicase activity, thereby overcoming R-loop-mediated stalling of RNA polymerases. Involved in rRNA processing. May bind to specific miRNA hairpins. Component of a multi-helicase-TICAM1 complex that acts as a cytoplasmic sensor of viral double-stranded RNA (dsRNA) and plays a role in the activation of a cascade of antiviral responses including the induction of pro-inflammatory cytokines via the adapter molecule TICAM1. The protein is Nucleolar RNA helicase 2 (Ddx21) of Mus musculus (Mouse).